The primary structure comprises 217 residues: Phosphatase MT3486 (217 aa).

Asp-9 (nucleophile) is an active-site residue.

This sequence belongs to the HAD-like hydrolase superfamily.

Its function is as follows. Able to hydrolyze geranyl diphosphate (GPP), farnesyl diphosphate (FPP) and geranylgeranyl diphosphate (GGPP) to respectively yield geraniol, farnesol and geranylgeraniol. The protein is Phosphatase MT3486 of Mycobacterium tuberculosis (strain CDC 1551 / Oshkosh).